Here is a 294-residue protein sequence, read N- to C-terminus: Glutamyl-Q tRNA(Asp) synthetase (294 aa).

Residues 7–11 and glutamate 43 each bind L-glutamate; that span reads RFAPS. The short motif at 10–20 is the 'HIGH' region element; it reads PSPSGPLHFGS. 4 residues coordinate Zn(2+): cysteine 99, cysteine 101, tyrosine 113, and cysteine 117. Residues tyrosine 168 and arginine 186 each contribute to the L-glutamate site. Residues 224 to 228 carry the 'KMSKS' region motif; the sequence is KLSKQ. Lysine 227 provides a ligand contact to ATP.

This sequence belongs to the class-I aminoacyl-tRNA synthetase family. GluQ subfamily. Zn(2+) serves as cofactor.

Functionally, catalyzes the tRNA-independent activation of glutamate in presence of ATP and the subsequent transfer of glutamate onto a tRNA(Asp). Glutamate is transferred on the 2-amino-5-(4,5-dihydroxy-2-cyclopenten-1-yl) moiety of the queuosine in the wobble position of the QUC anticodon. The sequence is that of Glutamyl-Q tRNA(Asp) synthetase from Vibrio parahaemolyticus serotype O3:K6 (strain RIMD 2210633).